A 565-amino-acid chain; its full sequence is DNA-directed RNA polymerase subunit beta C-terminal section (565 aa).

Belongs to the RNA polymerase beta chain family. In plastids the minimal PEP RNA polymerase catalytic core is composed of four subunits: alpha, beta, beta', and beta''. When a (nuclear-encoded) sigma factor is associated with the core the holoenzyme is formed, which can initiate transcription.

The protein localises to the plastid. Its subcellular location is the chloroplast. It catalyses the reaction RNA(n) + a ribonucleoside 5'-triphosphate = RNA(n+1) + diphosphate. Functionally, DNA-dependent RNA polymerase catalyzes the transcription of DNA into RNA using the four ribonucleoside triphosphates as substrates. This is DNA-directed RNA polymerase subunit beta C-terminal section (rpoB2) from Tetradesmus obliquus (Green alga).